Consider the following 92-residue polypeptide: SPQIQVYTRHPPENGKPNILNCYVSQFHPPHIEIEMLKNGKKIPEIEMSDLSFSKDWSFYILAHTEFTPTDSDTYSCRVTHVSMKEPKTVNW.

Positions 2–91 (PQIQVYTRHP…VSMKEPKTVN (90 aa)) constitute an Ig-like C1-type domain. An intrachain disulfide couples Cys22 to Cys77.

Belongs to the beta-2-microglobulin family. In terms of assembly, heterodimer of an alpha chain and a beta chain. Beta-2-microglobulin is the beta-chain of major histocompatibility complex class I molecules.

The protein resides in the secreted. In terms of biological role, component of the class I major histocompatibility complex (MHC). Involved in the presentation of peptide antigens to the immune system. The sequence is that of Beta-2-microglobulin (B2m) from Mus caroli (Ryukyu mouse).